Here is a 103-residue protein sequence, read N- to C-terminus: uncharacterized protein (103 aa).

The first 22 residues, 1–22 (MFRPFLNSLMLGSLFFPFIAIA), serve as a signal peptide directing secretion.

To the N-terminal of the FimA/PapA family of fimbria proteins.

This is an uncharacterized protein from Escherichia coli (strain K12).